Reading from the N-terminus, the 344-residue chain is L-lactate dehydrogenase B (344 aa).

NAD(+) contacts are provided by residues Asp62–Lys67 and Arg109. Residues Arg116, Asn148, and Arg179 each contribute to the substrate site. Asn148 contributes to the NAD(+) binding site. His203 acts as the Proton acceptor in catalysis. Thr258 lines the substrate pocket.

This sequence belongs to the LDH/MDH superfamily. LDH family. In terms of assembly, tetramer that arise from random association of LDH-A and LDH-B.

It carries out the reaction (S)-lactate + NAD(+) = pyruvate + NADH + H(+). Its pathway is fermentation; pyruvate fermentation to lactate; (S)-lactate from pyruvate: step 1/1. This chain is L-lactate dehydrogenase B, found in Hordeum vulgare (Barley).